We begin with the raw amino-acid sequence, 534 residues long: Lysophosphatidylcholine acyltransferase 1 (534 aa).

A disordered region spans residues 1–22 (MRLRGCGPRAAPASSAGASDAR). The Cytoplasmic segment spans residues 1–57 (MRLRGCGPRAAPASSAGASDARLLAPPGRNPFVHELRLSALQKAQVALMTLTLFPVR). Residues 7–22 (GPRAAPASSAGASDAR) are compositionally biased toward low complexity. The helical; Signal-anchor for type II membrane protein transmembrane segment at 58 to 78 (LLVAAAMMLLAWPLALVASLG) threads the bilayer. Over 79 to 534 (SAEKEPEQPP…GRKPVRKKLD (456 aa)) the chain is Lumenal. Residues 135–140 (HSSYFD) carry the HXXXXD motif motif. 2 consecutive EF-hand domains span residues 379–414 (PVSD…VCRP) and 451–486 (VAEL…YPAF). Residues aspartate 392, serine 394, serine 396, glutamate 398, and glutamate 403 each contribute to the Ca(2+) site. The interval 512–534 (GFCADFSPENSDAGRKPVRKKLD) is disordered. The span at 523–534 (DAGRKPVRKKLD) shows a compositional bias: basic and acidic residues. The short motif at 531–534 (KKLD) is the Di-lysine motif element.

The protein belongs to the 1-acyl-sn-glycerol-3-phosphate acyltransferase family. As to expression, erythrocytes.

The protein resides in the endoplasmic reticulum membrane. The protein localises to the golgi apparatus membrane. Its subcellular location is the cell membrane. It is found in the lipid droplet. It catalyses the reaction a 1-acyl-sn-glycero-3-phosphocholine + an acyl-CoA = a 1,2-diacyl-sn-glycero-3-phosphocholine + CoA. The catalysed reaction is a 1-acyl-sn-glycero-3-phosphate + an acyl-CoA = a 1,2-diacyl-sn-glycero-3-phosphate + CoA. It carries out the reaction a 1-O-alkyl-sn-glycero-3-phosphocholine + acetyl-CoA = a 1-O-alkyl-2-acetyl-sn-glycero-3-phosphocholine + CoA. The enzyme catalyses a 1-O-(1Z-alkenyl)-sn-glycero-3-phosphocholine + an acyl-CoA = a 1-O-(1Z-alkenyl)-2-acyl-sn-glycero-3-phosphocholine + CoA. It catalyses the reaction 1-acyl-sn-glycero-3-phospho-(1'-sn-glycerol) + an acyl-CoA = a 1,2-diacyl-sn-glycero-3-phospho-(1'-sn-glycerol) + CoA. The catalysed reaction is 1-hexadecanoyl-sn-glycero-3-phosphocholine + (9Z)-octadecenoyl-CoA = 1-hexadecanoyl-2-(9Z-octadecenoyl)-sn-glycero-3-phosphocholine + CoA. It carries out the reaction 1-hexadecanoyl-sn-glycero-3-phosphocholine + hexadecanoyl-CoA = 1,2-dihexadecanoyl-sn-glycero-3-phosphocholine + CoA. The enzyme catalyses 1-O-hexadecyl-sn-glycero-3-phosphocholine + hexadecanoyl-CoA = 1-O-hexadecyl-2-hexadecanoyl-sn-glycero-3-phosphocholine + CoA. It catalyses the reaction a 1-O-(1Z-alkenyl)-sn-glycero-3-phosphocholine + hexadecanoyl-CoA = 1-O-(1Z)-alkenyl-2-hexadecanoyl-sn-glycero-3-phosphocholine + CoA. The catalysed reaction is 1-hexadecanoyl-sn-glycero-3-phospho-(1'-sn-glycerol) + hexadecanoyl-CoA = 1,2-dihexadecanoyl-sn-glycero-3-phospho-(1'-sn-glycerol) + CoA. It carries out the reaction 1-dodecanoyl-sn-glycero-3-phosphocholine + hexadecanoyl-CoA = 1-dodecanoyl-2-hexadecanoyl-sn-glycero-3-phosphocholine + CoA. The enzyme catalyses 1-tetradecanoyl-sn-glycero-3-phosphocholine + hexadecanoyl-CoA = 1-tetradecanoyl-2-hexadecanoyl-sn-glycero-3-phosphocholine + CoA. It catalyses the reaction 1-O-octadecyl-sn-glycero-3-phosphocholine + hexadecanoyl-CoA = 1-O-octadecyl-2-hexadecanoyl-sn-glycero-3-phosphocholine + CoA. The catalysed reaction is 1-octadecanoyl-sn-glycero-3-phosphocholine + hexadecanoyl-CoA = 1-octadecanoyl-2-hexadecanoyl-sn-glycero-3-phosphocholine + CoA. It carries out the reaction 1-(9Z-octadecenoyl)-sn-glycero-3-phosphocholine + hexadecanoyl-CoA = 1-(9Z-octadecenoyl)-2-hexadecanoyl-sn-glycero-3-phosphocholine + CoA. The enzyme catalyses 1-eicosanoyl-sn-glycero-3-phosphocholine + hexadecanoyl-CoA = 1-eicosanoyl-2-hexadecanoyl-sn-glycero-3-phosphocholine + CoA. It catalyses the reaction hexanoyl-CoA + 1-hexadecanoyl-sn-glycero-3-phosphocholine = 1-hexadecanoyl-2-hexanoyl-sn-glycero-3-phosphocholine + CoA. The catalysed reaction is octanoyl-CoA + 1-hexadecanoyl-sn-glycero-3-phosphocholine = 1-hexadecanoyl-2-octanoyl-sn-glycero-3-phosphocholine + CoA. It carries out the reaction decanoyl-CoA + 1-hexadecanoyl-sn-glycero-3-phosphocholine = 1-hexadecanoyl-2-decanoyl-sn-glycero-3-phosphocholine + CoA. The enzyme catalyses dodecanoyl-CoA + 1-hexadecanoyl-sn-glycero-3-phosphocholine = 1-hexadecanoyl-2-dodecanoyl-sn-glycero-3-phosphocholine + CoA. It catalyses the reaction tetradecanoyl-CoA + 1-hexadecanoyl-sn-glycero-3-phosphocholine = 1-hexadecanoyl-2-tetradecanoyl-sn-glycero-3-phosphocholine + CoA. The catalysed reaction is (9Z,12Z)-octadecadienoyl-CoA + 1-hexadecanoyl-sn-glycero-3-phosphocholine = 1-hexadecanoyl-2-(9Z,12Z-octadecadienoyl)-sn-glycero-3-phosphocholine + CoA. It carries out the reaction (4Z,7Z,10Z,13Z,16Z,19Z)-docosahexaenoyl-CoA + 1-hexadecanoyl-sn-glycero-3-phosphocholine = 1-hexadecanoyl-2-(4Z,7Z,10Z,13Z,16Z,19Z-docosahexaenoyl)-sn-glycero-3-phosphocholine + CoA. The enzyme catalyses 1-hexadecanoyl-sn-glycero-3-phosphocholine + acetyl-CoA = 1-hexadecanoyl-2-acetyl-sn-glycero-3-phosphocholine + CoA. It catalyses the reaction eicosanoyl-CoA + 1-hexadecanoyl-sn-glycero-3-phosphocholine = 1-hexadecanoyl-2-eicosanoyl-sn-glycero-3-phosphocholine + CoA. The catalysed reaction is 1-O-hexadecyl-sn-glycero-3-phosphocholine + acetyl-CoA = 1-O-hexadecyl-2-acetyl-sn-glycero-3-phosphocholine + CoA. It carries out the reaction a 1-acyl-sn-glycero-3-phosphocholine + hexadecanoyl-CoA = 1-acyl-2-hexadecanoyl-sn-glycero-3-phosphocholine + CoA. The enzyme catalyses a 1-acyl-sn-glycero-3-phosphate + hexadecanoyl-CoA = 1-acyl-2-hexadecanoyl-sn-glycero-3-phosphate + CoA. It catalyses the reaction 1-acyl-sn-glycero-3-phospho-(1'-sn-glycerol) + hexadecanoyl-CoA = 1-acyl-2-hexadecanoyl-sn-glycero-3-phospho-(1'-sn-glycerol) + CoA. The protein operates within lipid metabolism; phospholipid metabolism. Exhibits acyltransferase activity. Exhibits acetyltransferase activity. Activity is calcium-independent. Catalyzes the conversion of lysophosphatidylcholine (1-acyl-sn-glycero-3-phosphocholine or LPC) into phosphatidylcholine (1,2-diacyl-sn-glycero-3-phosphocholine or PC). Catalyzes the conversion 1-acyl-sn-glycerol-3-phosphate (lysophosphatidic acid or LPA) into 1,2-diacyl-sn-glycerol-3-phosphate (phosphatidic acid or PA) by incorporating an acyl moiety at the sn-2 position of the glycerol backbone. Displays a clear preference for saturated fatty acyl-CoAs, and 1-myristoyl or 1-palmitoyl LPC as acyl donors and acceptors, respectively. Involved in platelet-activating factor (PAF) biosynthesis by catalyzing the conversion of the PAF precursor, 1-O-alkyl-sn-glycero-3-phosphocholine (lyso-PAF) into 1-O-alkyl-2-acetyl-sn-glycero-3-phosphocholine (PAF). May synthesize phosphatidylcholine in pulmonary surfactant, thereby playing a pivotal role in respiratory physiology. Involved in the regulation of lipid droplet number and size. This chain is Lysophosphatidylcholine acyltransferase 1 (LPCAT1), found in Homo sapiens (Human).